The sequence spans 194 residues: Dof zinc finger protein DOF1.7 (194 aa).

Residues 33 to 87 (LKCPRCDSPNTKFCYYNNYNLSQPRHFCKNCRRYWTKGGALRNIPVGGGTRKSNK) form a Dof-type zinc finger. Zn(2+)-binding residues include Cys-35, Cys-38, Cys-60, and Cys-63. The tract at residues 74–125 (RNIPVGGGTRKSNKRSGSSPSSNLKNQTVAEKPDHHGSGSEEKEERVSGQEM) is disordered. Residues 88 to 99 (RSGSSPSSNLKN) are compositionally biased toward low complexity. The segment covering 104 to 121 (EKPDHHGSGSEEKEERVS) has biased composition (basic and acidic residues).

The protein resides in the nucleus. Functionally, transcription factor that binds specifically to a 5'-AA[AG]G-3' consensus core sequence. This Arabidopsis thaliana (Mouse-ear cress) protein is Dof zinc finger protein DOF1.7 (DOF1.7).